Here is a 675-residue protein sequence, read N- to C-terminus: Protein PALS1 (675 aa).

Disordered regions lie at residues 1–32 and 52–79; these read MTTS…HPKH and RSAQ…KQEL. Positions 1–345 are required for the correct localization of PALS1 and PATJ at cell-cell contacts and the normal formation of tight junctions and adherens junctions; the sequence is MTTSYMNGHV…QQIKPPPAKE (345 aa). S14 and S25 each carry phosphoserine. Residues 21-140 form an interaction with PARD6B region; that stretch reads LGLASPEEHP…LKHIQHTLVD (120 aa). Positions 54 to 79 are enriched in basic and acidic residues; that stretch reads AQLERIRQQQEDMRRRREEEGKKQEL. Phosphoserine is present on residues S83 and S84. L27 domains follow at residues 120-177 and 179-235; these read KILE…NKAS and PFPL…MQLE. The interaction with LIN7C stretch occupies residues 181-243; the sequence is PLIANVQDLV…LEPITDERVY (63 aa). One can recognise a PDZ domain in the interval 256 to 336; that stretch reads IVRIEKARDI…TLTFVLIPSQ (81 aa). Residues 345–417 enclose the SH3 domain; it reads ETVIHVKAHF…PGKSFQQQRE (73 aa). Residues 479–660 form the Guanylate kinase-like domain; it reads KRPIILIGPQ…AYQELLRLIN (182 aa). ATP is bound at residue 486-493; it reads GPQNCGQN.

The protein belongs to the MAGUK family. In terms of assembly, heterodimer with MPP1. Forms a heterotrimeric complex composed of PALS1, LIN7B and PATJ; the N-terminal L27 domain of PALS1 interacts with the L27 domain of PATJ and the C-terminal L27 domain of PALS1 interacts with the L27 domain of LIN7B. Component of a complex composed of PALS1, CRB1 and MPP4. Component of a complex whose core is composed of ARHGAP17, AMOT, PALS1, PATJ and PARD3/PAR3. Component of a complex composed of PALS1, CRB1 and EPB41L5. Within the complex, interacts (via HOOK domain) with EPB41L5 (via FERM domain), and interacts with CRB1 (via intracellular domain). Component of a complex composed of PALS1, MPP3 and CRB1; PALS1 acts as a bridging protein between MPP3 (via guanylate kinase-like domain) and CRB1. Component of a complex composed of CRB3, PALS1 and PATJ. As part of the Crumbs complex; interacts with WWP1, the interaction is enhanced by AMOTL2 and facilitates WWP1 localization to the plasma membrane. The Crumbs complex promotes monoubiquitination of AMOTL2 by WWP1, which activates the Hippo signaling pathway. Interacts (via PDZ domain) with PATJ (via N-terminus). Interacts with EZR. Interacts (via PDZ domain) with CRB1 (via C-terminal ERLI motif). While the PDZ domain is sufficient for interaction with CRB1, the adjacent SH3 and guanylate kinase-like domains are likely to contribute to a high affinity interaction. Interacts with WWTR1/TAZ (via WW domain). Interacts with MPP7. Interacts (via PDZ domain) with CRB3 (via C-terminus). Interacts with LIN7C. Interacts with MPDZ. Interacts with PARD6B. Interacts with SC6A1. Interacts with CDH5; the interaction promotes PALS1 localization to cell junctions and is required for CDH5-mediated vascular lumen formation and endothelial cell. Interacts with NPHP1 (via coiled coil and SH3 domains). Interacts with NPHP4. Interacts with CRB2.

The protein resides in the golgi apparatus. The protein localises to the cell membrane. It is found in the endomembrane system. It localises to the cell junction. Its subcellular location is the tight junction. The protein resides in the adherens junction. The protein localises to the cell projection. It is found in the axon. It localises to the perikaryon. Its subcellular location is the apical cell membrane. Functionally, plays a role in tight junction biogenesis and in the establishment of cell polarity in epithelial cells. Also involved in adherens junction biogenesis by ensuring correct localization of the exocyst complex protein EXOC4/SEC8 which allows trafficking of adherens junction structural component CDH1 to the cell surface. Plays a role through its interaction with CDH5 in vascular lumen formation and endothelial membrane polarity. Required during embryonic and postnatal retinal development. Required for the maintenance of cerebellar progenitor cells in an undifferentiated proliferative state, preventing premature differentiation, and is required for cerebellar histogenesis, fissure formation, cerebellar layer organization and cortical development. Plays a role in neuronal progenitor cell survival, potentially via promotion of mTOR signaling. Plays a role in the radial and longitudinal extension of the myelin sheath in Schwann cells. May modulate SC6A1/GAT1-mediated GABA uptake by stabilizing the transporter. May play a role in the T-cell receptor-mediated activation of NF-kappa-B. Required for localization of EZR to the apical membrane of parietal cells and may play a role in the dynamic remodeling of the apical cytoskeleton. Required for the normal polarized localization of the vesicular marker STX4. Required for the correct trafficking of the myelin proteins PMP22 and MAG. Involved in promoting phosphorylation and cytoplasmic retention of transcriptional coactivators YAP1 and WWTR1/TAZ which leads to suppression of TGFB1-dependent transcription of target genes such as CCN2/CTGF, SERPINE1/PAI1, SNAI1/SNAIL1 and SMAD7. In Rattus norvegicus (Rat), this protein is Protein PALS1.